Reading from the N-terminus, the 75-residue chain is UPF0235 protein MSMEG_3845 (75 aa).

This sequence belongs to the UPF0235 family.

The chain is UPF0235 protein MSMEG_3845 from Mycolicibacterium smegmatis (strain ATCC 700084 / mc(2)155) (Mycobacterium smegmatis).